The primary structure comprises 70 residues: Conotoxin Lt3.4 (70 aa).

Residues 1–24 (MLKMGVLLFTFLVLFPLAMFQLDA) form the signal peptide. Positions 25 to 54 (DQPVERYAENKQDLNRDERMKIMLSALRQR) are excised as a propeptide. At Q55 the chain carries Pyrrolidone carboxylic acid. Disulfide bonds link C56/C68, C57/C66, and C62/C69.

This sequence belongs to the conotoxin M superfamily. Expressed by the venom duct.

The protein localises to the secreted. This Conus litteratus (Lettered cone) protein is Conotoxin Lt3.4.